We begin with the raw amino-acid sequence, 251 residues long: Ribosomal RNA small subunit methyltransferase J (251 aa).

Residues 100–101 (RD), 116–117 (ER), and Asp170 contribute to the S-adenosyl-L-methionine site.

This sequence belongs to the methyltransferase superfamily. RsmJ family.

It is found in the cytoplasm. The catalysed reaction is guanosine(1516) in 16S rRNA + S-adenosyl-L-methionine = N(2)-methylguanosine(1516) in 16S rRNA + S-adenosyl-L-homocysteine + H(+). Functionally, specifically methylates the guanosine in position 1516 of 16S rRNA. In Actinobacillus pleuropneumoniae serotype 5b (strain L20), this protein is Ribosomal RNA small subunit methyltransferase J.